We begin with the raw amino-acid sequence, 817 residues long: Transcription factor SPT20 homolog-like 2 (817 aa).

Positions 1–14 (MDRDLEQALDRTEN) are enriched in basic and acidic residues. Disordered stretches follow at residues 1-28 (MDRDLEQALDRTENITEIAQQRRPRRRY), 249-275 (PQQEQSDCPPPPELRVSTSGQKEERKV), 369-553 (PRKK…AAGR), 598-630 (PGSGAPAPAGISGSGLQSSGGPLPDARPGAVQA), and 675-697 (QLQQPTAAHPPQPGPQGSTLGLS). The segment covering 423 to 440 (SHSSSGPASVSQLSSWKT) has biased composition (polar residues). Composition is skewed to low complexity over residues 469-479 (SSSGKISSGNS), 494-505 (PAAAPAVAAAAP), 513-531 (AAPALAAAAVAAAAGGAAP), and 598-618 (PGSGAPAPAGISGSGLQSSGG).

Belongs to the SPT20 family.

The protein is Transcription factor SPT20 homolog-like 2 (SUPT20HL2) of Homo sapiens (Human).